The sequence spans 1070 residues: TSC22 domain family protein 1 (1070 aa).

The tract at residues 1 to 98 (MHQPPESTAA…SQAQLQAQPL (98 aa)) is required for interaction with TGFBR1 and promotion of TGF-beta signaling. Disordered stretches follow at residues 1–110 (MHQP…KKSG), 125–289 (ISSN…PASV), 458–487 (VTSE…VGSG), 604–637 (YSQA…STQM), and 830–858 (TSQV…AQTP). Positions 36 to 45 (GSASALNAAG) are enriched in low complexity. Positions 58 to 70 (FPPPSLLQPPPPA) are enriched in pro residues. Low complexity predominate over residues 84–100 (SLNLLSQAQLQAQPLAP). Residues 133-142 (EDTESYDDLD) are compositionally biased toward acidic residues. Residues 216-240 (HPHHLHHHHHIHHGHHLQHGHHHPS) show a composition bias toward basic residues. Positions 241 to 250 (HVAVASASIP) are enriched in low complexity. Over residues 261 to 271 (KLSTTGSSDSI) the composition is skewed to polar residues. Position 263 is a phosphoserine (S263). Composition is skewed to low complexity over residues 272-289 (TPVA…PASV) and 465-478 (TSGS…STRS). The span at 611-622 (VQTPLPGAPPPQ) shows a compositional bias: pro residues. Positions 830-845 (TSQVSSAGPSGMPSAP) are enriched in low complexity. Residues 849–858 (VPPQNIAQTP) are compositionally biased toward polar residues. The leucine-zipper stretch occupies residues 1003–1024 (LKEQIKELIEKNSQLEQENNLL). The interval 1034–1070 (AQFQAQLQTGSPPATTQPQGTTQPPAQPASQGSGPTA) is disordered. The span at 1041 to 1070 (QTGSPPATTQPQGTTQPPAQPASQGSGPTA) shows a compositional bias: low complexity.

Belongs to the TSC-22/Dip/Bun family. As to quaternary structure, forms homodimers. Forms heterodimers. Component of a complex composed of TSC22D1 (via N-terminus), TGFBR1 and TGFBR2; the interaction between TSC22D1 and TGFBR1 is inhibited by SMAD7 and promoted by TGFB1. Interacts with SMAD7; the interaction requires TGF-beta and the interaction is inhibited by TGFBR1. Interacts with TPT1/fortilin; interaction results in the destabilization of TSC22D1 protein and prevents TSC22D1-mediated apoptosis. Interacts with SMAD4 (via N-terminus). Interacts with ACVRL1/ALK1, ACVR1/ALK2, BMPR1A/ALK3, ACVR1B/ALK4, BMPR1B/ALK6, ACVR2A/ACTRII, and BMPR2. Interacts with SMAD6. Interacts with TFE3; the interaction is enhanced in the presence of TGF-beta. Forms a heterodimer with TSC22D4/THG1. In terms of assembly, forms a heterodimer with TSC22D4/THG1. Interacts with histone H1-2. Interacts with GNL3.

It is found in the cytoplasm. It localises to the nucleus. The protein localises to the cell membrane. The protein resides in the mitochondrion. Its function is as follows. Transcriptional repressor. Acts on the C-type natriuretic peptide (CNP) promoter. Acts to promote CASP3-mediated apoptosis. Positively regulates TGF-beta signaling by interacting with SMAD7 which inhibits binding of SMAD7 to TGFBR1, preventing recruitment of SMURF ubiquitin ligases to TGFBR1 and inhibiting SMURF-mediated ubiquitination and degradation of TGFBR1. Contributes to enhancement of TGF-beta signaling by binding to and modulating the transcription activator activity of SMAD4. Promotes TGF-beta-induced transcription of COL1A2; via its interaction with TFE3 at E-boxes in the gene proximal promoter. Plays a role in the repression of hematopoietic precursor cell growth. Promotes IL2 deprivation-induced apoptosis in T-lymphocytes, via repression of TSC22D3/GILZ transcription and activation of the caspase cascade. In terms of biological role, may act to negatively regulate TGFB3 signaling and thereby inhibit cell death in mammary gland cells. Positively regulates cell death in response to TGFB3 during mammary gland involution. This chain is TSC22 domain family protein 1, found in Pongo abelii (Sumatran orangutan).